Here is a 157-residue protein sequence, read N- to C-terminus: uncharacterized protein (157 aa).

This sequence to E.coli YcjD and H.influenzae HI_0925.

This is an uncharacterized protein from Haemophilus influenzae (strain ATCC 51907 / DSM 11121 / KW20 / Rd).